We begin with the raw amino-acid sequence, 314 residues long: DNA-directed RNA polymerase subunit alpha (314 aa).

The interval 1–228 (MIEIEKPKIE…EHLSIFVNLT (228 aa)) is alpha N-terminal domain (alpha-NTD). The tract at residues 245-314 (KEKVLEMTIE…DLGLSLRNEN (70 aa)) is alpha C-terminal domain (alpha-CTD).

The protein belongs to the RNA polymerase alpha chain family. In terms of assembly, homodimer. The RNAP catalytic core consists of 2 alpha, 1 beta, 1 beta' and 1 omega subunit. When a sigma factor is associated with the core the holoenzyme is formed, which can initiate transcription.

The enzyme catalyses RNA(n) + a ribonucleoside 5'-triphosphate = RNA(n+1) + diphosphate. Its function is as follows. DNA-dependent RNA polymerase catalyzes the transcription of DNA into RNA using the four ribonucleoside triphosphates as substrates. The polypeptide is DNA-directed RNA polymerase subunit alpha (Listeria innocua serovar 6a (strain ATCC BAA-680 / CLIP 11262)).